The chain runs to 125 residues: Transposase for transposon Tn554 (125 aa).

Functionally, one of three proteins encoded by transposon Tn554 required for its transposition. The sequence is that of Transposase for transposon Tn554 (tnpC1) from Staphylococcus aureus (strain Mu50 / ATCC 700699).